We begin with the raw amino-acid sequence, 548 residues long: Chaperonin GroEL (548 aa).

ATP-binding positions include 30–33 (TLGP), Lys-51, 87–91 (DGTTT), Gly-415, and Asp-495.

The protein belongs to the chaperonin (HSP60) family. Forms a cylinder of 14 subunits composed of two heptameric rings stacked back-to-back. Interacts with the co-chaperonin GroES.

Its subcellular location is the cytoplasm. The catalysed reaction is ATP + H2O + a folded polypeptide = ADP + phosphate + an unfolded polypeptide.. Functionally, together with its co-chaperonin GroES, plays an essential role in assisting protein folding. The GroEL-GroES system forms a nano-cage that allows encapsulation of the non-native substrate proteins and provides a physical environment optimized to promote and accelerate protein folding. This Erwinia tasmaniensis (strain DSM 17950 / CFBP 7177 / CIP 109463 / NCPPB 4357 / Et1/99) protein is Chaperonin GroEL.